The sequence spans 267 residues: tRNA pseudouridine synthase A (267 aa).

The Nucleophile role is filled by Asp-53. Tyr-111 contributes to the substrate binding site.

This sequence belongs to the tRNA pseudouridine synthase TruA family. As to quaternary structure, homodimer.

It carries out the reaction uridine(38/39/40) in tRNA = pseudouridine(38/39/40) in tRNA. Functionally, formation of pseudouridine at positions 38, 39 and 40 in the anticodon stem and loop of transfer RNAs. The sequence is that of tRNA pseudouridine synthase A from Alcanivorax borkumensis (strain ATCC 700651 / DSM 11573 / NCIMB 13689 / SK2).